A 299-amino-acid chain; its full sequence is uncharacterized protein (299 aa).

Residues 1–20 form a disordered region; the sequence is MTTKHELVINTNEPSAPNAD. A helical transmembrane segment spans residues 172-192; that stretch reads SFFIPPMVVISTPICLGLTVF.

Belongs to the IIV-6 259R family.

The protein localises to the membrane. This is an uncharacterized protein from Acheta domesticus (House cricket).